The sequence spans 144 residues: Large ribosomal subunit protein uL15 (144 aa).

The disordered stretch occupies residues 1 to 51 (MQLNTLSPAQGEKKSRKRVGRGIGSGIGKTCGSGHKGQKSRSGGFNKIGFE). The segment covering 21 to 35 (RGIGSGIGKTCGSGH) has biased composition (gly residues).

Belongs to the universal ribosomal protein uL15 family. Part of the 50S ribosomal subunit.

Functionally, binds to the 23S rRNA. In Vesicomyosocius okutanii subsp. Calyptogena okutanii (strain HA), this protein is Large ribosomal subunit protein uL15.